A 343-amino-acid polypeptide reads, in one-letter code: Anthranilate phosphoribosyltransferase (343 aa).

Residues Gly83, 86–87, Thr91, 93–96, 111–119, and Ser123 each bind 5-phospho-alpha-D-ribose 1-diphosphate; these read GD, NIST, and KHGGRSVSS. Gly83 is a binding site for anthranilate. Ser95 is a binding site for Mg(2+). Residue Arg169 participates in anthranilate binding. Positions 228 and 229 each coordinate Mg(2+).

Belongs to the anthranilate phosphoribosyltransferase family. As to quaternary structure, homodimer. Mg(2+) serves as cofactor.

The catalysed reaction is N-(5-phospho-beta-D-ribosyl)anthranilate + diphosphate = 5-phospho-alpha-D-ribose 1-diphosphate + anthranilate. Its pathway is amino-acid biosynthesis; L-tryptophan biosynthesis; L-tryptophan from chorismate: step 2/5. Catalyzes the transfer of the phosphoribosyl group of 5-phosphorylribose-1-pyrophosphate (PRPP) to anthranilate to yield N-(5'-phosphoribosyl)-anthranilate (PRA). This is Anthranilate phosphoribosyltransferase from Thiobacillus denitrificans (strain ATCC 25259 / T1).